We begin with the raw amino-acid sequence, 239 residues long: Ribonuclease PH (239 aa).

Phosphate is bound by residues arginine 86 and 124–126 (GTR).

The protein belongs to the RNase PH family. In terms of assembly, homohexameric ring arranged as a trimer of dimers.

The catalysed reaction is tRNA(n+1) + phosphate = tRNA(n) + a ribonucleoside 5'-diphosphate. Phosphorolytic 3'-5' exoribonuclease that plays an important role in tRNA 3'-end maturation. Removes nucleotide residues following the 3'-CCA terminus of tRNAs; can also add nucleotides to the ends of RNA molecules by using nucleoside diphosphates as substrates, but this may not be physiologically important. Probably plays a role in initiation of 16S rRNA degradation (leading to ribosome degradation) during starvation. In Rhizobium etli (strain ATCC 51251 / DSM 11541 / JCM 21823 / NBRC 15573 / CFN 42), this protein is Ribonuclease PH.